A 416-amino-acid chain; its full sequence is D-amino acid dehydrogenase (416 aa).

An FAD-binding site is contributed by 3–17 (VIVLGAGIIGVTSAY).

The protein belongs to the DadA oxidoreductase family. FAD is required as a cofactor.

It carries out the reaction a D-alpha-amino acid + A + H2O = a 2-oxocarboxylate + AH2 + NH4(+). The protein operates within amino-acid degradation; D-alanine degradation; NH(3) and pyruvate from D-alanine: step 1/1. Functionally, oxidative deamination of D-amino acids. This is D-amino acid dehydrogenase from Sinorhizobium medicae (strain WSM419) (Ensifer medicae).